We begin with the raw amino-acid sequence, 20 residues long: Antifungal protein 2 large subunit (20 aa).

A disordered region spans residues Pro1–Glu20.

Heterodimer of a large and a small subunit.

Its function is as follows. Possesses antifungal activity against P.infestans but not F.graminearum. The chain is Antifungal protein 2 large subunit from Malva parviflora (Little mallow).